The sequence spans 94 residues: Lipoate-protein ligase A subunit 2 (94 aa).

In terms of assembly, heterodimer composed of LplA and LplB.

The enzyme catalyses L-lysyl-[lipoyl-carrier protein] + (R)-lipoate + ATP = N(6)-[(R)-lipoyl]-L-lysyl-[lipoyl-carrier protein] + AMP + diphosphate + H(+). It participates in protein modification; protein lipoylation via exogenous pathway; protein N(6)-(lipoyl)lysine from lipoate: step 1/2. The protein operates within protein modification; protein lipoylation via exogenous pathway; protein N(6)-(lipoyl)lysine from lipoate: step 2/2. Part of a lipoate-protein ligase complex that catalyzes both the ATP-dependent activation of exogenously supplied lipoate to lipoyl-AMP and the transfer of the activated lipoyl onto the lipoyl domains of lipoate-dependent enzymes. Can also use octanoate as substrate. This Thermoplasma acidophilum (strain ATCC 25905 / DSM 1728 / JCM 9062 / NBRC 15155 / AMRC-C165) protein is Lipoate-protein ligase A subunit 2 (lplB).